A 311-amino-acid polypeptide reads, in one-letter code: Ribonuclease HIII (311 aa).

In terms of domain architecture, RNase H type-2 spans 95–311; it reads MSIVGSDEVG…NTEKAFRLLK (217 aa). 3 residues coordinate a divalent metal cation: D101, E102, and D206.

It belongs to the RNase HII family. RnhC subfamily. Requires Mn(2+) as cofactor. The cofactor is Mg(2+).

Its subcellular location is the cytoplasm. The enzyme catalyses Endonucleolytic cleavage to 5'-phosphomonoester.. Endonuclease that specifically degrades the RNA of RNA-DNA hybrids. The polypeptide is Ribonuclease HIII (Bacillus cereus (strain 03BB102)).